The following is a 118-amino-acid chain: MSTYAFNRELRLLTPEHYQKVFQQAHSAGSPHLTIIARANNLSHPRLGLAVPKKQIKTAVGRNRFKRICRESFRLHQNQLANKDFVVIAKKSAQDLSNEELFNLLGKLWQRLSRPSRG.

It belongs to the RnpA family. As to quaternary structure, consists of a catalytic RNA component (M1 or rnpB) and a protein subunit.

The catalysed reaction is Endonucleolytic cleavage of RNA, removing 5'-extranucleotides from tRNA precursor.. Functionally, RNaseP catalyzes the removal of the 5'-leader sequence from pre-tRNA to produce the mature 5'-terminus. It can also cleave other RNA substrates such as 4.5S RNA. The protein component plays an auxiliary but essential role in vivo by binding to the 5'-leader sequence and broadening the substrate specificity of the ribozyme. This chain is Ribonuclease P protein component, found in Vibrio cholerae serotype O1 (strain ATCC 39541 / Classical Ogawa 395 / O395).